Reading from the N-terminus, the 50-residue chain is Small ribosomal subunit protein uS14 (50 aa).

Residues C15, C18, C33, and C36 each contribute to the Zn(2+) site.

The protein belongs to the universal ribosomal protein uS14 family. Zinc-binding uS14 subfamily. In terms of assembly, part of the 30S ribosomal subunit. Zn(2+) is required as a cofactor.

In terms of biological role, binds 16S rRNA, required for the assembly of 30S particles. The sequence is that of Small ribosomal subunit protein uS14 from Methanosarcina acetivorans (strain ATCC 35395 / DSM 2834 / JCM 12185 / C2A).